The chain runs to 658 residues: Integrator complex subunit 9 (658 aa).

Residues K2 and F19 each contribute to the 1D-myo-inositol hexakisphosphate site. Residue K58 forms a Glycyl lysine isopeptide (Lys-Gly) (interchain with G-Cter in SUMO2) linkage. 1D-myo-inositol hexakisphosphate is bound by residues K510 and R511. The segment at 548–574 (DNKHLLQPPPRPAQPTSGKKRKRVSDD) is disordered. Residues 566 to 570 (KKRKR) carry the Nuclear localization signal motif.

It belongs to the metallo-beta-lactamase superfamily. RNA-metabolizing metallo-beta-lactamase-like family. INTS9 subfamily. As to quaternary structure, component of the Integrator complex, composed of core subunits INTS1, INTS2, INTS3, INTS4, INTS5, INTS6, INTS7, INTS8, INTS9/RC74, INTS10, INTS11/CPSF3L, INTS12, INTS13, INTS14 and INTS15. The core complex associates with protein phosphatase 2A subunits PPP2CA and PPP2R1A, to form the Integrator-PP2A (INTAC) complex. INTS9 is part of the RNA endonuclease subcomplex, composed of INTS4, INTS9, INTS11 and inositol hexakisphosphate (InsP6). Interacts with WDR73; interaction is required for the assembly of the RNA endonuclease subcomplex in the cytoplasm. Interacts with BRAT1; interaction is required for the assembly of the RNA endonuclease subcomplex. Interacts with ESRRB, ESRRB is not a core component of the Integrator complex and this association is a bridge for the interaction with the multiprotein complex Integrator; attracts the transcriptional machinery.

The protein localises to the nucleus. Its subcellular location is the cytoplasm. In terms of biological role, component of the integrator complex, a multiprotein complex that terminates RNA polymerase II (Pol II) transcription in the promoter-proximal region of genes. The integrator complex provides a quality checkpoint during transcription elongation by driving premature transcription termination of transcripts that are unfavorably configured for transcriptional elongation: the complex terminates transcription by (1) catalyzing dephosphorylation of the C-terminal domain (CTD) of Pol II subunit POLR2A/RPB1 and SUPT5H/SPT5, (2) degrading the exiting nascent RNA transcript via endonuclease activity and (3) promoting the release of Pol II from bound DNA. The integrator complex is also involved in terminating the synthesis of non-coding Pol II transcripts, such as enhancer RNAs (eRNAs), small nuclear RNAs (snRNAs), telomerase RNAs and long non-coding RNAs (lncRNAs). Mediates recruitment of cytoplasmic dynein to the nuclear envelope, probably as component of the integrator complex. In Homo sapiens (Human), this protein is Integrator complex subunit 9.